Consider the following 168-residue polypeptide: S-ribosylhomocysteine lyase (168 aa).

Histidine 54, histidine 58, and cysteine 128 together coordinate Fe cation.

The protein belongs to the LuxS family. In terms of assembly, homodimer. It depends on Fe cation as a cofactor.

The enzyme catalyses S-(5-deoxy-D-ribos-5-yl)-L-homocysteine = (S)-4,5-dihydroxypentane-2,3-dione + L-homocysteine. Involved in the synthesis of autoinducer 2 (AI-2) which is secreted by bacteria and is used to communicate both the cell density and the metabolic potential of the environment. The regulation of gene expression in response to changes in cell density is called quorum sensing. Catalyzes the transformation of S-ribosylhomocysteine (RHC) to homocysteine (HC) and 4,5-dihydroxy-2,3-pentadione (DPD). The polypeptide is S-ribosylhomocysteine lyase (Mannheimia succiniciproducens (strain KCTC 0769BP / MBEL55E)).